The sequence spans 116 residues: Large ribosomal subunit protein uL18 (116 aa).

This sequence belongs to the universal ribosomal protein uL18 family. Part of the 50S ribosomal subunit; part of the 5S rRNA/L5/L18/L25 subcomplex. Contacts the 5S and 23S rRNAs.

In terms of biological role, this is one of the proteins that bind and probably mediate the attachment of the 5S RNA into the large ribosomal subunit, where it forms part of the central protuberance. The sequence is that of Large ribosomal subunit protein uL18 from Ectopseudomonas mendocina (strain ymp) (Pseudomonas mendocina).